Consider the following 164-residue polypeptide: Nucleotide-binding protein Acid345_2028 (164 aa).

Belongs to the YajQ family.

Nucleotide-binding protein. The chain is Nucleotide-binding protein Acid345_2028 from Koribacter versatilis (strain Ellin345).